We begin with the raw amino-acid sequence, 442 residues long: Putative mannan endo-1,6-alpha-mannosidase C970.02 (442 aa).

A signal peptide spans 1–19 (MSLTIFISLATILFSFAEA). Asn25, Asn82, Asn107, Asn131, Asn201, Asn236, Asn261, Asn264, Asn277, and Asn361 each carry an N-linked (GlcNAc...) asparagine glycan.

Belongs to the glycosyl hydrolase 76 family.

The enzyme catalyses Random hydrolysis of (1-&gt;6)-alpha-D-mannosidic linkages in unbranched (1-&gt;6)-mannans.. This chain is Putative mannan endo-1,6-alpha-mannosidase C970.02, found in Schizosaccharomyces pombe (strain 972 / ATCC 24843) (Fission yeast).